A 176-amino-acid polypeptide reads, in one-letter code: Acireductone dioxygenase (176 aa).

Residues Met1–Arg21 are disordered. Basic and acidic residues predominate over residues Lys9–Gly20. 4 residues coordinate Fe(2+): His81, His83, Glu87, and His126. His81, His83, Glu87, and His126 together coordinate Ni(2+).

This sequence belongs to the acireductone dioxygenase (ARD) family. The cofactor is Fe(2+). Ni(2+) is required as a cofactor.

Its subcellular location is the cytoplasm. The protein localises to the nucleus. The enzyme catalyses 1,2-dihydroxy-5-(methylsulfanyl)pent-1-en-3-one + O2 = 4-methylsulfanyl-2-oxobutanoate + formate + 2 H(+). The catalysed reaction is 1,2-dihydroxy-5-(methylsulfanyl)pent-1-en-3-one + O2 = 3-(methylsulfanyl)propanoate + CO + formate + 2 H(+). The protein operates within amino-acid biosynthesis; L-methionine biosynthesis via salvage pathway; L-methionine from S-methyl-5-thio-alpha-D-ribose 1-phosphate: step 5/6. Its function is as follows. Catalyzes 2 different reactions between oxygen and the acireductone 1,2-dihydroxy-3-keto-5-methylthiopentene (DHK-MTPene) depending upon the metal bound in the active site. Fe-containing acireductone dioxygenase (Fe-ARD) produces formate and 2-keto-4-methylthiobutyrate (KMTB), the alpha-ketoacid precursor of methionine in the methionine recycle pathway. Ni-containing acireductone dioxygenase (Ni-ARD) produces methylthiopropionate, carbon monoxide and formate, and does not lie on the methionine recycle pathway. In Aspergillus fumigatus (strain ATCC MYA-4609 / CBS 101355 / FGSC A1100 / Af293) (Neosartorya fumigata), this protein is Acireductone dioxygenase (adi1).